A 425-amino-acid polypeptide reads, in one-letter code: Serine--tRNA ligase (425 aa).

230-232 (TAE) provides a ligand contact to L-serine. 261-263 (RSE) is a binding site for ATP. Residue Glu-284 coordinates L-serine. 348 to 351 (EISS) serves as a coordination point for ATP. An L-serine-binding site is contributed by Ser-384.

Belongs to the class-II aminoacyl-tRNA synthetase family. Type-1 seryl-tRNA synthetase subfamily. In terms of assembly, homodimer. The tRNA molecule binds across the dimer.

Its subcellular location is the cytoplasm. The catalysed reaction is tRNA(Ser) + L-serine + ATP = L-seryl-tRNA(Ser) + AMP + diphosphate + H(+). It catalyses the reaction tRNA(Sec) + L-serine + ATP = L-seryl-tRNA(Sec) + AMP + diphosphate + H(+). The protein operates within aminoacyl-tRNA biosynthesis; selenocysteinyl-tRNA(Sec) biosynthesis; L-seryl-tRNA(Sec) from L-serine and tRNA(Sec): step 1/1. In terms of biological role, catalyzes the attachment of serine to tRNA(Ser). Is also able to aminoacylate tRNA(Sec) with serine, to form the misacylated tRNA L-seryl-tRNA(Sec), which will be further converted into selenocysteinyl-tRNA(Sec). This chain is Serine--tRNA ligase, found in Streptococcus pyogenes serotype M12 (strain MGAS2096).